A 400-amino-acid chain; its full sequence is Putative transposase for insertion sequence element IS5376 (400 aa).

One can recognise an HTH IS21-type domain in the interval G5 to M67. The H-T-H motif DNA-binding region spans I20–H39. The tract at residues R35–K55 is disordered. The Integrase catalytic domain occupies Y113 to S287.

The protein belongs to the transposase IS21/IS408/IS1162 family.

Functionally, involved in the transposition of the insertion sequence. The sequence is that of Putative transposase for insertion sequence element IS5376 from Geobacillus stearothermophilus (Bacillus stearothermophilus).